The sequence spans 84 residues: Putative regulatory protein Hore_09800 (84 aa).

It belongs to the RemA family.

This is Putative regulatory protein Hore_09800 from Halothermothrix orenii (strain H 168 / OCM 544 / DSM 9562).